We begin with the raw amino-acid sequence, 274 residues long: Large ribosomal subunit protein uL2 (274 aa).

A disordered region spans residues 221–256 (RGTAMNPVDHPHGGGEGRNFGKHPVTPWGVPTKGYK).

Belongs to the universal ribosomal protein uL2 family. Part of the 50S ribosomal subunit. Forms a bridge to the 30S subunit in the 70S ribosome.

In terms of biological role, one of the primary rRNA binding proteins. Required for association of the 30S and 50S subunits to form the 70S ribosome, for tRNA binding and peptide bond formation. It has been suggested to have peptidyltransferase activity; this is somewhat controversial. Makes several contacts with the 16S rRNA in the 70S ribosome. This is Large ribosomal subunit protein uL2 from Thioalkalivibrio sulfidiphilus (strain HL-EbGR7).